The sequence spans 273 residues: Putative peptidyl-prolyl cis-trans isomerase Cbf2 (273 aa).

Positions Met-1–Ala-21 are cleaved as a signal peptide. Residues Pro-131–Asn-228 form the PpiC domain.

The enzyme catalyses [protein]-peptidylproline (omega=180) = [protein]-peptidylproline (omega=0). This chain is Putative peptidyl-prolyl cis-trans isomerase Cbf2 (cbf2), found in Campylobacter jejuni subsp. jejuni serotype O:2 (strain ATCC 700819 / NCTC 11168).